A 429-amino-acid polypeptide reads, in one-letter code: Citrate synthase (429 aa).

Catalysis depends on residues His306 and Asp364.

Belongs to the citrate synthase family.

It catalyses the reaction oxaloacetate + acetyl-CoA + H2O = citrate + CoA + H(+). The protein operates within carbohydrate metabolism; tricarboxylic acid cycle; isocitrate from oxaloacetate: step 1/2. The sequence is that of Citrate synthase (gltA) from Rhizobium meliloti (strain 1021) (Ensifer meliloti).